Consider the following 562-residue polypeptide: NAD-dependent malic enzyme (562 aa).

The active-site Proton donor is Tyr101. Residue Arg154 participates in NAD(+) binding. Residue Lys172 is the Proton acceptor of the active site. The a divalent metal cation site is built by Glu243, Asp244, and Asp267. NAD(+) contacts are provided by Asp267 and Asn415.

Belongs to the malic enzymes family. Homotetramer. The cofactor is Mg(2+). It depends on Mn(2+) as a cofactor.

It catalyses the reaction (S)-malate + NAD(+) = pyruvate + CO2 + NADH. It carries out the reaction oxaloacetate + H(+) = pyruvate + CO2. The sequence is that of NAD-dependent malic enzyme from Aliivibrio fischeri (strain MJ11) (Vibrio fischeri).